A 1101-amino-acid polypeptide reads, in one-letter code: Serine/threonine-protein kinase PSK2 (1101 aa).

Thr118 carries the post-translational modification Phosphothreonine. A Protein kinase domain is found at 841–1099 (FTILQVMGEG…IDEIYEDKWL (259 aa)). ATP is bound by residues 847–855 (MGEGAYGKV) and Lys870. The active-site Proton acceptor is Asp975.

Belongs to the protein kinase superfamily. Ser/Thr protein kinase family.

It localises to the cytoplasm. The enzyme catalyses L-seryl-[protein] + ATP = O-phospho-L-seryl-[protein] + ADP + H(+). The catalysed reaction is L-threonyl-[protein] + ATP = O-phospho-L-threonyl-[protein] + ADP + H(+). Its function is as follows. Serine/threonine-protein kinase involved in the control of sugar metabolism and translation. Phosphorylates UGP1, which is required for normal glycogen and beta-(1,6)-glucan synthesis. This phosphorylation shifts glucose partitioning toward cell wall glucan synthesis at the expense of glycogen synthesis. Also phosphorylates the glycogen synthase GSY2 and the translation factors CAF20, TIF11 and SRO9. This chain is Serine/threonine-protein kinase PSK2 (PSK2), found in Saccharomyces cerevisiae (strain ATCC 204508 / S288c) (Baker's yeast).